The following is a 95-amino-acid chain: Aspartyl/glutamyl-tRNA(Asn/Gln) amidotransferase subunit C (95 aa).

It belongs to the GatC family. As to quaternary structure, heterotrimer of A, B and C subunits.

It carries out the reaction L-glutamyl-tRNA(Gln) + L-glutamine + ATP + H2O = L-glutaminyl-tRNA(Gln) + L-glutamate + ADP + phosphate + H(+). The catalysed reaction is L-aspartyl-tRNA(Asn) + L-glutamine + ATP + H2O = L-asparaginyl-tRNA(Asn) + L-glutamate + ADP + phosphate + 2 H(+). Functionally, allows the formation of correctly charged Asn-tRNA(Asn) or Gln-tRNA(Gln) through the transamidation of misacylated Asp-tRNA(Asn) or Glu-tRNA(Gln) in organisms which lack either or both of asparaginyl-tRNA or glutaminyl-tRNA synthetases. The reaction takes place in the presence of glutamine and ATP through an activated phospho-Asp-tRNA(Asn) or phospho-Glu-tRNA(Gln). The polypeptide is Aspartyl/glutamyl-tRNA(Asn/Gln) amidotransferase subunit C (Halorhodospira halophila (strain DSM 244 / SL1) (Ectothiorhodospira halophila (strain DSM 244 / SL1))).